Reading from the N-terminus, the 187-residue chain is Flavin prenyltransferase UbiX (187 aa).

Residues 9–11 (GAS), Ser34, and Arg123 contribute to the FMN site. Tyr153 and Lys169 together coordinate dimethylallyl phosphate.

It belongs to the UbiX/PAD1 family.

The enzyme catalyses dimethylallyl phosphate + FMNH2 = prenylated FMNH2 + phosphate. Flavin prenyltransferase that catalyzes the synthesis of the prenylated FMN cofactor (prenyl-FMN) for 4-hydroxy-3-polyprenylbenzoic acid decarboxylase UbiD. The prenyltransferase is metal-independent and links a dimethylallyl moiety from dimethylallyl monophosphate (DMAP) to the flavin N5 and C6 atoms of FMN. This is Flavin prenyltransferase UbiX from Helicobacter pylori (strain ATCC 700392 / 26695) (Campylobacter pylori).